Reading from the N-terminus, the 799-residue chain is Potassium transporter 21 (799 aa).

The Cytoplasmic segment spans residues 1–56 (MDPGVEKKKQQMELVDVESGGLPVERQDSLFREAVRAEHAGAAHWDEQDSWGRTMS). The helical transmembrane segment at 57–77 (LAFQCVGILYGDIGTSSLYVY) threads the bilayer. Topologically, residues 78 to 93 (SSTFEHGIGHPDDVVG) are extracellular. Residues 94 to 114 (VLSLIVYSFMLFTVIKIVFVA) traverse the membrane as a helical segment. Topologically, residues 115–181 (LHANDHGDGG…QLLEASKAAK (67 aa)) are cytoplasmic. The helical transmembrane segment at 182 to 202 (ISLFLLTILAIAMVISDAVLT) threads the bilayer. Residues 203–219 (PPISVLSAVGGLREKVP) lie on the Extracellular side of the membrane. The helical transmembrane segment at 220–240 (HLTTDQIVWITVAILVVLFAI) threads the bilayer. Residues 241 to 251 (QRYGTDKVGYS) are Cytoplasmic-facing. The chain crosses the membrane as a helical span at residues 252–272 (FAPIILLWLLLIGATGLYNLI). Topologically, residues 273-301 (KHDISVLRAFNPKYIIDYFRRNKKEGWVS) are extracellular. Residues 302–322 (LGSILLCFTGSEALFANLGYF) form a helical membrane-spanning segment. Residues 323-328 (SIRSIQ) lie on the Cytoplasmic side of the membrane. A helical membrane pass occupies residues 329-349 (LSFSFALLPSVLLTYIGQAAF). The Extracellular portion of the chain corresponds to 350–362 (LSKNPKNVANTFF). Residues 363–383 (AATPISLFWPTFIMAIAASII) form a helical membrane-spanning segment. The Cytoplasmic portion of the chain corresponds to 384 to 420 (GSQAMISCAFATVSHLQSLSCFPRVKILHTSKRFPGQ). The helical transmembrane segment at 421 to 441 (LYIPGVNFLLCVAACVVTVSF) threads the bilayer. The Extracellular segment spans residues 442–452 (KTTVIIGKAHE). A helical transmembrane segment spans residues 453–473 (ICVILVMIITTLLMTIVMLLV). The Cytoplasmic segment spans residues 474-475 (WK). Residues 476–496 (INILWVALFFITFTSTEAVYL) form a helical membrane-spanning segment. The Extracellular portion of the chain corresponds to 497-508 (SSVLYKFTHGPY). A helical transmembrane segment spans residues 509 to 529 (VPVAMSVVLMVVMIVWHYVHV). Residues 530-799 (KRYKYELEHT…LLKVGISYEI (270 aa)) are Cytoplasmic-facing.

Belongs to the HAK/KUP transporter (TC 2.A.72.3) family.

The protein localises to the membrane. High-affinity potassium transporter. This is Potassium transporter 21 (HAK21) from Oryza sativa subsp. japonica (Rice).